Reading from the N-terminus, the 343-residue chain is GTP 3',8-cyclase (343 aa).

Positions Pro19–Pro244 constitute a Radical SAM core domain. Arg28 is a binding site for GTP. The [4Fe-4S] cluster site is built by Cys35 and Cys39. S-adenosyl-L-methionine is bound at residue Tyr41. Cys42 contacts [4Fe-4S] cluster. Arg77 contributes to the GTP binding site. Residue Gly81 participates in S-adenosyl-L-methionine binding. Residue Thr111 coordinates GTP. Ser135 contacts S-adenosyl-L-methionine. Lys171 contacts GTP. Residue Met205 participates in S-adenosyl-L-methionine binding. Residues Cys268 and Cys271 each contribute to the [4Fe-4S] cluster site. Arg273 to Arg275 serves as a coordination point for GTP. Position 285 (Cys285) interacts with [4Fe-4S] cluster.

The protein belongs to the radical SAM superfamily. MoaA family. In terms of assembly, monomer and homodimer. [4Fe-4S] cluster is required as a cofactor.

It carries out the reaction GTP + AH2 + S-adenosyl-L-methionine = (8S)-3',8-cyclo-7,8-dihydroguanosine 5'-triphosphate + 5'-deoxyadenosine + L-methionine + A + H(+). Its pathway is cofactor biosynthesis; molybdopterin biosynthesis. Its function is as follows. Catalyzes the cyclization of GTP to (8S)-3',8-cyclo-7,8-dihydroguanosine 5'-triphosphate. In Nitrobacter hamburgensis (strain DSM 10229 / NCIMB 13809 / X14), this protein is GTP 3',8-cyclase.